Here is a 613-residue protein sequence, read N- to C-terminus: Chaperone protein DnaK (613 aa).

Residues 578–613 (MYQSQATQGTSQNSSQNNNSQNNNGDTVDADFKESK) are disordered. Over residues 580 to 602 (QSQATQGTSQNSSQNNNSQNNNG) the composition is skewed to low complexity.

Belongs to the heat shock protein 70 family.

Functionally, acts as a chaperone. The chain is Chaperone protein DnaK from Picrophilus torridus (strain ATCC 700027 / DSM 9790 / JCM 10055 / NBRC 100828 / KAW 2/3).